The sequence spans 528 residues: Facilitator of iron transport 1 (528 aa).

A signal peptide spans 1–18; that stretch reads MKLSSAFVLSAITVAALG. A run of 3 repeats spans residues 20-98, 99-168, and 169-233. Residues 20-274 form a 4 X approximate tandem repeats region; sequence SITTTITATK…ERAPASTVAT (255 aa). Disordered regions lie at residues 79 to 100, 145 to 172, and 214 to 234; these read SIVE…GSSI, AAET…SITT, and ASPV…SGSS. Polar residues-rich tracts occupy residues 81–93 and 145–163; these read VEPS…TSAD and AAET…TSAD. Residues 234-274 form a 1-4; truncated repeat; that stretch reads SITTTITATKNGHVYTKTVTQDATFVWTGEGERAPASTVAT. 12 consecutive repeat copies span residues 289-294, 295-300, 301-306, 307-312, 313-318, 319-324, 325-330, 331-336, 337-342, 343-348, 349-353, and 354-359. The interval 289 to 359 is 12 X 6 AA approximate tandem repeats, Ser/Thr-rich; sequence SIVEASSAVE…AVETSAVETS (71 aa). Low complexity-rich tracts occupy residues 298–388 and 398–435; these read ETSS…QASS and TSSV…SSAT. The interval 298–471 is disordered; that stretch reads ETSSAAETSS…SNNWSSSSSA (174 aa). Residue Asn-412 is glycosylated (N-linked (GlcNAc...) asparagine). The span at 446–457 shows a compositional bias: polar residues; sequence YTESSSRDAQSV. Over residues 462-471 the composition is skewed to low complexity; it reads SNNWSSSSSA. Asn-464 carries an N-linked (GlcNAc...) asparagine glycan. 488–495 is a binding site for ATP; the sequence is GIFTNGKS. Asn-503 carries N-linked (GlcNAc...) asparagine glycosylation. Gly-506 carries GPI-anchor amidated glycine lipidation. Positions 507-528 are cleaved as a propeptide — removed in mature form; that stretch reads AADSIAAGTGLMGAALAAVIFL.

In terms of processing, the GPI-anchor is attached to the protein in the endoplasmic reticulum and serves to target the protein to the cell surface. There, the glucosamine-inositol phospholipid moiety is cleaved off and the GPI-modified mannoprotein is covalently attached via its lipidless GPI glycan remnant to the 1,6-beta-glucan of the outer cell wall layer.

The protein localises to the secreted. It is found in the cell wall. It localises to the membrane. Its function is as follows. Involved in the uptake of non-siderophore sources of iron and the siderophores ferrioxamine B and ferrichrome. Has a role in the retention of iron in the cell wall and periplasmic space. The polypeptide is Facilitator of iron transport 1 (FIT1) (Saccharomyces cerevisiae (strain ATCC 204508 / S288c) (Baker's yeast)).